The primary structure comprises 160 residues: Ribosomal RNA large subunit methyltransferase H (160 aa).

S-adenosyl-L-methionine contacts are provided by Leu76 and Gly108.

Belongs to the RNA methyltransferase RlmH family. Homodimer.

The protein localises to the cytoplasm. The enzyme catalyses pseudouridine(1915) in 23S rRNA + S-adenosyl-L-methionine = N(3)-methylpseudouridine(1915) in 23S rRNA + S-adenosyl-L-homocysteine + H(+). Its function is as follows. Specifically methylates the pseudouridine at position 1915 (m3Psi1915) in 23S rRNA. The chain is Ribosomal RNA large subunit methyltransferase H from Bradyrhizobium diazoefficiens (strain JCM 10833 / BCRC 13528 / IAM 13628 / NBRC 14792 / USDA 110).